A 197-amino-acid chain; its full sequence is Phosphoheptose isomerase (197 aa).

Positions 36–197 constitute an SIS domain; sequence MTASLMNNGK…IDCLLLGVEE (162 aa). 51–53 is a substrate binding site; that stretch reads NGG. His-60 and Glu-64 together coordinate Zn(2+). Residues Glu-64, 93–94, 119–121, Ser-124, and Gln-174 each bind substrate; these read ND and STS. 2 residues coordinate Zn(2+): Gln-174 and His-182.

It belongs to the SIS family. GmhA subfamily. In terms of assembly, homotetramer. Zn(2+) is required as a cofactor.

It localises to the cytoplasm. It catalyses the reaction 2 D-sedoheptulose 7-phosphate = D-glycero-alpha-D-manno-heptose 7-phosphate + D-glycero-beta-D-manno-heptose 7-phosphate. Its pathway is carbohydrate biosynthesis; D-glycero-D-manno-heptose 7-phosphate biosynthesis; D-glycero-alpha-D-manno-heptose 7-phosphate and D-glycero-beta-D-manno-heptose 7-phosphate from sedoheptulose 7-phosphate: step 1/1. In terms of biological role, catalyzes the isomerization of sedoheptulose 7-phosphate in D-glycero-D-manno-heptose 7-phosphate. This chain is Phosphoheptose isomerase, found in Azoarcus sp. (strain BH72).